The primary structure comprises 319 residues: tRNA uridine(34) hydroxylase (319 aa).

Residues 127–221 (KQEDTVIIDA…YGKDPEVQGE (95 aa)) form the Rhodanese domain. C181 serves as the catalytic Cysteine persulfide intermediate.

It belongs to the TrhO family.

The catalysed reaction is uridine(34) in tRNA + AH2 + O2 = 5-hydroxyuridine(34) in tRNA + A + H2O. In terms of biological role, catalyzes oxygen-dependent 5-hydroxyuridine (ho5U) modification at position 34 in tRNAs. The chain is tRNA uridine(34) hydroxylase from Bacillus cereus (strain ATCC 10987 / NRS 248).